The chain runs to 178 residues: MKHTVEVMIPEAEIKARIAELGRQITERYKDSGSEMVLVGLLRGSFMFMADLCREVQVPHEVDFMTASSYGSGMSTTRDVKILKDLDEDIRGKDVLIVEDIIDSGNTLSKVREILGLREPKSLAICTLLDKPSRREVDVPVEFVGFSIPDEFVVGYGIDYAQRYRHLPYVGKVVLLDE.

The diphosphate site is built by arginine 43 and glycine 44. Glutamate 99 contributes to the GMP binding site. IMP is bound at residue glutamate 99. Residues glutamate 99 and aspartate 100 each contribute to the Mg(2+) site. Residue aspartate 103 is the Proton acceptor of the active site. GMP contacts are provided by residues 103-108 (DSGNTL), lysine 131, and aspartate 159. IMP contacts are provided by residues 103–108 (DSGNTL) and lysine 131. Position 165 (arginine 165) interacts with diphosphate.

It belongs to the purine/pyrimidine phosphoribosyltransferase family. In terms of assembly, homotetramer. It depends on Mg(2+) as a cofactor.

Its subcellular location is the cytoplasm. It catalyses the reaction IMP + diphosphate = hypoxanthine + 5-phospho-alpha-D-ribose 1-diphosphate. The catalysed reaction is GMP + diphosphate = guanine + 5-phospho-alpha-D-ribose 1-diphosphate. It functions in the pathway purine metabolism; IMP biosynthesis via salvage pathway; IMP from hypoxanthine: step 1/1. Its function is as follows. Purine salvage pathway enzyme which catalyzes the transfer of the ribosyl-5-phosphate group from 5-phospho-alpha-D-ribose 1-diphosphate (PRPP) to the N9 position of hypoxanthine to yield IMP (inosine 5'-monophosphate). To a lesser extent, can also act on guanine leading to GMP, but shows a highly less efficient activity with xanthine. This is Hypoxanthine phosphoribosyltransferase (hpt) from Salmonella typhimurium (strain LT2 / SGSC1412 / ATCC 700720).